Reading from the N-terminus, the 246-residue chain is NAD-dependent protein deacylase (246 aa).

The Deacetylase sirtuin-type domain maps to 1–246; it reads MDLSQARAAL…RGLELLLEDD (246 aa). 21 to 41 provides a ligand contact to NAD(+); it reads GAGISAESGIPTFRDAQTGHW. The substrate site is built by Tyr-66 and Arg-69. 101–104 is an NAD(+) binding site; sequence QNVD. His-123 (proton acceptor) is an active-site residue. NAD(+) is bound by residues 191 to 193, 217 to 219, and Ala-235; these read GTS and NPE.

The protein belongs to the sirtuin family. Class III subfamily.

It localises to the cytoplasm. The enzyme catalyses N(6)-acetyl-L-lysyl-[protein] + NAD(+) + H2O = 2''-O-acetyl-ADP-D-ribose + nicotinamide + L-lysyl-[protein]. The catalysed reaction is N(6)-succinyl-L-lysyl-[protein] + NAD(+) + H2O = 2''-O-succinyl-ADP-D-ribose + nicotinamide + L-lysyl-[protein]. In terms of biological role, NAD-dependent lysine deacetylase and desuccinylase that specifically removes acetyl and succinyl groups on target proteins. Modulates the activities of several proteins which are inactive in their acylated form. The sequence is that of NAD-dependent protein deacylase from Deinococcus radiodurans (strain ATCC 13939 / DSM 20539 / JCM 16871 / CCUG 27074 / LMG 4051 / NBRC 15346 / NCIMB 9279 / VKM B-1422 / R1).